The chain runs to 524 residues: MPQLSLSWLGLGPVAASPWLLLLLVGGSWLLARVLAWTYTFYDNCRRLQCFPQPPKQNWFWGHQGLVTPTEEGMKTLTQLVTTYPQGFKLWLGPTFPLLILCHPDIIRPITSASAAVAPKDMIFYGFLKPWLGDGLLLSGGDKWSRHRRMLTPAFHFNILKPYMKIFNKSVNIMHDKWQRLASEGSARLDMFEHISLMTLDSLQKCVFSFESNCQEKPSEYIAAILELSAFVEKRNQQILLHTDFLYYLTPDGQRFRRACHLVHDFTDAVIQERRCTLPTQGIDDFLKNKAKSKTLDFIDVLLLSKDEDGKELSDEDIRAEADTFMFEGHDTTASGLSWVLYHLAKHPEYQEQCRQEVQELLKDREPIEIEWDDLAQLPFLTMCIKESLRLHPPVPVISRCCTQDFVLPDGRVIPKGIVCLINIIGIHYNPTVWPDPEVYDPFRFDQENIKERSPLAFIPFSAGPRNCIGQAFAMAEMKVVLALTLLHFRILPTHTEPRRKPELILRAEGGLWLRVEPLGANSQ.

A helical transmembrane segment spans residues 15–37 (AASPWLLLLLVGGSWLLARVLAW). 4-hydroxynonenal-conjugated cysteine occurs at positions 45 and 260. His-261 carries the post-translational modification 4-hydroxynonenal-conjugated histidine. Glu-328 contacts heme. At His-347 the chain carries 4-hydroxynonenal-conjugated histidine. Cys-354 carries the 4-hydroxynonenal-conjugated cysteine modification. Lys-451 is modified (4-hydroxynonenal-conjugated lysine). Cys-468 is a binding site for heme.

Belongs to the cytochrome P450 family. The cofactor is heme. In terms of processing, 4-hydroxynonenal conjugation impairs substrate binding and the long-chain fatty acid omega-monooxygenase activity. Expressed mainly in human liver, followed by kidney, heart, and skeletal muscle.

It localises to the endoplasmic reticulum membrane. The protein resides in the microsome membrane. The enzyme catalyses an organic molecule + reduced [NADPH--hemoprotein reductase] + O2 = an alcohol + oxidized [NADPH--hemoprotein reductase] + H2O + H(+). It catalyses the reaction an omega-methyl-long-chain fatty acid + reduced [NADPH--hemoprotein reductase] + O2 = an omega-hydroxy-long-chain fatty acid + oxidized [NADPH--hemoprotein reductase] + H2O + H(+). It carries out the reaction dodecanoate + reduced [NADPH--hemoprotein reductase] + O2 = 12-hydroxydodecanoate + oxidized [NADPH--hemoprotein reductase] + H2O + H(+). The catalysed reaction is hexadecanoate + reduced [NADPH--hemoprotein reductase] + O2 = 16-hydroxyhexadecanoate + oxidized [NADPH--hemoprotein reductase] + H2O + H(+). The enzyme catalyses (9Z)-octadecenoate + reduced [NADPH--hemoprotein reductase] + O2 = 18-hydroxy-(9Z)-octadecenoate + oxidized [NADPH--hemoprotein reductase] + H2O + H(+). It catalyses the reaction (5Z,8Z,11Z,14Z)-eicosatetraenoate + reduced [NADPH--hemoprotein reductase] + O2 = 20-hydroxy-(5Z,8Z,11Z,14Z)-eicosatetraenoate + oxidized [NADPH--hemoprotein reductase] + H2O + H(+). It carries out the reaction (4Z,7Z,10Z,13Z,16Z,19Z)-docosahexaenoate + reduced [NADPH--hemoprotein reductase] + O2 = 22-hydroxy-(4Z,7Z,10Z,13Z,16Z,19Z)-docosahexaenoate + oxidized [NADPH--hemoprotein reductase] + H2O + H(+). The catalysed reaction is 8-hydroxy-(5Z,9E,11Z,14Z)-eicosatetraenoate + reduced [NADPH--hemoprotein reductase] + O2 = 8,20-dihydroxy-(5Z,9E,11Z,14Z)-eicosatetraenoate + oxidized [NADPH--hemoprotein reductase] + H2O + H(+). The enzyme catalyses 3-hydroxyhexadecanoate + reduced [NADPH--hemoprotein reductase] + O2 = 3,16-dihydroxyhexadecanoate + oxidized [NADPH--hemoprotein reductase] + H2O + H(+). It catalyses the reaction 3-hydroxyoctadecanoate + reduced [NADPH--hemoprotein reductase] + O2 = 3,18-dihydroxyoctadecanoate + oxidized [NADPH--hemoprotein reductase] + H2O + H(+). It carries out the reaction phylloquinone + reduced [NADPH--hemoprotein reductase] + O2 = omega-hydroxyphylloquinone + oxidized [NADPH--hemoprotein reductase] + H2O + H(+). The catalysed reaction is menaquinone-4 + reduced [NADPH--hemoprotein reductase] + O2 = omega-hydroxymenaquinone-4 + oxidized [NADPH--hemoprotein reductase] + H2O + H(+). The enzyme catalyses 2-hexyl-5-pentylresorcinol + reduced [NADPH--hemoprotein reductase] + O2 = 2-hexyl-5-(5-hydroxypentyl)resorcinol + oxidized [NADPH--hemoprotein reductase] + H2O + H(+). It catalyses the reaction 2-hexyl-5-heptylresorcinol + reduced [NADPH--hemoprotein reductase] + O2 = 2-hexyl-5-(7-hydroxyheptyl)resorcinol + oxidized [NADPH--hemoprotein reductase] + H2O + H(+). It carries out the reaction 12-hydroxy-(5Z,8Z,10E,14Z)-eicosatetraenoate + reduced [NADPH--hemoprotein reductase] + O2 = 12,20-dihydroxy-(5Z,8Z,10E,14Z)-eicosatetraenoate + oxidized [NADPH--hemoprotein reductase] + H2O + H(+). The catalysed reaction is 15-hydroxy-(5Z,8Z,11Z,13E)-eicosatetraenoate + reduced [NADPH--hemoprotein reductase] + O2 = 15,20-dihydroxy-(5Z,8Z,11Z,13E)-eicosatetraenoate + oxidized [NADPH--hemoprotein reductase] + H2O + H(+). It participates in lipid metabolism; arachidonate metabolism. The protein operates within lipid metabolism; oxylipin biosynthesis. Its pathway is cofactor degradation; phylloquinone degradation. It functions in the pathway xenobiotic degradation. Inhibition of the long-chain fatty acid omega-monooxygenase activity by 4-hydroxynonenal (4-HNE) conjugation. A cytochrome P450 monooxygenase involved in the metabolism of various endogenous substrates, including fatty acids and their oxygenated derivatives (oxylipins). Mechanistically, uses molecular oxygen inserting one oxygen atom into a substrate, and reducing the second into a water molecule, with two electrons provided by NADPH via cytochrome P450 reductase (CPR; NADPH-ferrihemoprotein reductase). Catalyzes with high efficiency the oxidation of the terminal carbon (omega-oxidation) of 3-hydroxy fatty acids, such as 3-hydroxyhexadecanoic and 3-hydroxyoctadecanoic acids, likely participating in the biosynthesis of long-chain 3-hydroxydicarboxylic acids. Omega-hydroxylates and inactivates phylloquinone (vitamin K1), and menaquinone-4 (MK-4, a form of vitamin K2), both acting as cofactors in blood coagulation. Metabolizes with low efficiciency fatty acids, including (5Z,8Z,11Z,14Z)-eicosatetraenoic acid (arachidonate) and its oxygenated metabolite 8-hydroxyeicosatetraenoic acid (8-HETE). Catalyzes N- and O-demethylation of drugs such as erythromycin, benzphetamine, ethylmorphine, chlorpromazine, imipramine and verapamil. Catalyzes the oxidation of dialkylresorcinol 2. This is Cytochrome P450 4F11 from Homo sapiens (Human).